Consider the following 844-residue polypeptide: Protein translocase subunit SecA 1 (844 aa).

ATP is bound by residues Q91, 109–113, and D498; that span reads GEGKT. Over residues 793-813 the composition is skewed to basic and acidic residues; sequence KSKSFGEAKHVTAEDGKEKAK. The interval 793-825 is disordered; sequence KSKSFGEAKHVTAEDGKEKAKPQPIVKGDQVGR. Residues C829, C831, C840, and H841 each coordinate Zn(2+).

This sequence belongs to the SecA family. In terms of assembly, monomer and homodimer. Part of the essential Sec protein translocation apparatus which comprises SecA, SecYEG and auxiliary proteins SecDF. Other proteins may also be involved. Zn(2+) serves as cofactor.

The protein localises to the cell membrane. It is found in the cytoplasm. It catalyses the reaction ATP + H2O + cellular proteinSide 1 = ADP + phosphate + cellular proteinSide 2.. Functionally, part of the Sec protein translocase complex. Interacts with the SecYEG preprotein conducting channel. Has a central role in coupling the hydrolysis of ATP to the transfer of proteins into and across the cell membrane, serving as an ATP-driven molecular motor driving the stepwise translocation of polypeptide chains across the membrane. This is Protein translocase subunit SecA 1 from Staphylococcus epidermidis (strain ATCC 35984 / DSM 28319 / BCRC 17069 / CCUG 31568 / BM 3577 / RP62A).